The chain runs to 279 residues: Movement protein (279 aa).

Residues 246-279 are disordered; the sequence is SESEDLNVESPPAAIGSSSASRSEAFRPQVVNGL. Positions 254–268 are enriched in low complexity; sequence ESPPAAIGSSSASRS.

This sequence belongs to the cucumovirus movement protein family.

The protein localises to the host cell junction. It is found in the host plasmodesma. Functionally, transports viral genome to neighboring plant cells directly through plasmosdesmata, without any budding. The movement protein allows efficient cell to cell propagation, by bypassing the host cell wall barrier. Acts by forming a tubular structure at the host plasmodesmata, enlarging it enough to allow free passage of virion capsids. This is Movement protein from Cucurbita pepo (Vegetable marrow).